We begin with the raw amino-acid sequence, 106 residues long: Cell division protein FtsL (106 aa).

The Cytoplasmic portion of the chain corresponds to M1–R22. A helical transmembrane segment spans residues V23–H43. Over H44–K106 the chain is Periplasmic.

This sequence belongs to the FtsL family. As to quaternary structure, part of a complex composed of FtsB, FtsL and FtsQ.

The protein resides in the cell inner membrane. Its function is as follows. Essential cell division protein. May link together the upstream cell division proteins, which are predominantly cytoplasmic, with the downstream cell division proteins, which are predominantly periplasmic. The polypeptide is Cell division protein FtsL (Vibrio cholerae serotype O1 (strain ATCC 39315 / El Tor Inaba N16961)).